The following is a 95-amino-acid chain: MTKSELIESLAGKYPHLSPRDIEHAIKEMIGCMSEALAGGERIEIRGFGSFSLHHRPPRVGRNPKTGESVHLPSRRVPHFKPGKELRDRVNSIKD.

The tract at residues 52–95 is disordered; the sequence is SLHHRPPRVGRNPKTGESVHLPSRRVPHFKPGKELRDRVNSIKD. Basic and acidic residues predominate over residues 82–95; that stretch reads PGKELRDRVNSIKD.

Belongs to the bacterial histone-like protein family. In terms of assembly, heterodimer of an alpha and a beta chain.

Its function is as follows. This protein is one of the two subunits of integration host factor, a specific DNA-binding protein that functions in genetic recombination as well as in transcriptional and translational control. In Methylococcus capsulatus (strain ATCC 33009 / NCIMB 11132 / Bath), this protein is Integration host factor subunit beta.